Consider the following 405-residue polypeptide: Riboflavin biosynthesis protein RibBA (405 aa).

The segment at 1–205 (MEEIKLNTIE…IKDLIAYRLK (205 aa)) is DHBP synthase. Residues 30–31 (RE), Asp-35, 144–148 (RAGHT), and Glu-168 each bind D-ribulose 5-phosphate. Glu-31 serves as a coordination point for Mg(2+). A Mg(2+)-binding site is contributed by His-147. Residues 206–405 (QESIVEKGVE…RMGHELHNIK (200 aa)) form a GTP cyclohydrolase II region. 256–260 (RMHSS) contacts GTP. Zn(2+) contacts are provided by Cys-261, Cys-272, and Cys-274. Residues Gln-277, 299–301 (EGR), and Thr-321 each bind GTP. The active-site Proton acceptor; for GTP cyclohydrolase activity is Asp-333. Arg-335 serves as the catalytic Nucleophile; for GTP cyclohydrolase activity. GTP-binding residues include Thr-356 and Lys-361.

It in the N-terminal section; belongs to the DHBP synthase family. In the C-terminal section; belongs to the GTP cyclohydrolase II family. Mg(2+) serves as cofactor. Requires Mn(2+) as cofactor. Zn(2+) is required as a cofactor.

The enzyme catalyses D-ribulose 5-phosphate = (2S)-2-hydroxy-3-oxobutyl phosphate + formate + H(+). The catalysed reaction is GTP + 4 H2O = 2,5-diamino-6-hydroxy-4-(5-phosphoribosylamino)-pyrimidine + formate + 2 phosphate + 3 H(+). Its pathway is cofactor biosynthesis; riboflavin biosynthesis; 2-hydroxy-3-oxobutyl phosphate from D-ribulose 5-phosphate: step 1/1. It participates in cofactor biosynthesis; riboflavin biosynthesis; 5-amino-6-(D-ribitylamino)uracil from GTP: step 1/4. Its function is as follows. Catalyzes the conversion of D-ribulose 5-phosphate to formate and 3,4-dihydroxy-2-butanone 4-phosphate. Functionally, catalyzes the conversion of GTP to 2,5-diamino-6-ribosylamino-4(3H)-pyrimidinone 5'-phosphate (DARP), formate and pyrophosphate. In Porphyromonas gingivalis (strain ATCC 33277 / DSM 20709 / CIP 103683 / JCM 12257 / NCTC 11834 / 2561), this protein is Riboflavin biosynthesis protein RibBA.